Reading from the N-terminus, the 514-residue chain is Histidine ammonia-lyase (514 aa).

Positions 142-144 (ASG) form a cross-link, 5-imidazolinone (Ala-Gly). The residue at position 143 (S143) is a 2,3-didehydroalanine (Ser).

This sequence belongs to the PAL/histidase family. Post-translationally, contains an active site 4-methylidene-imidazol-5-one (MIO), which is formed autocatalytically by cyclization and dehydration of residues Ala-Ser-Gly.

Its subcellular location is the cytoplasm. The enzyme catalyses L-histidine = trans-urocanate + NH4(+). Its pathway is amino-acid degradation; L-histidine degradation into L-glutamate; N-formimidoyl-L-glutamate from L-histidine: step 1/3. The chain is Histidine ammonia-lyase from Sorangium cellulosum (strain So ce56) (Polyangium cellulosum (strain So ce56)).